Here is a 145-residue protein sequence, read N- to C-terminus: Peptidyl-prolyl cis-trans isomerase (145 aa).

In terms of domain architecture, PPIase cyclophilin-type spans M1 to A145.

It belongs to the cyclophilin-type PPIase family.

It catalyses the reaction [protein]-peptidylproline (omega=180) = [protein]-peptidylproline (omega=0). Its function is as follows. PPIases accelerate the folding of proteins. It catalyzes the cis-trans isomerization of proline imidic peptide bonds in oligopeptides. The polypeptide is Peptidyl-prolyl cis-trans isomerase (rot) (Synechococcus elongatus (strain ATCC 33912 / PCC 7942 / FACHB-805) (Anacystis nidulans R2)).